The following is a 491-amino-acid chain: MQDSSSALESYSDVTLIGAGIMSGTLGAFLTELAPEKSLAIFEKLSAVGLESSNEWNNAGTGHSALCELNYTEQKADGEVSVERAVKICEDFQLSLQLWSYLVETGRIQAPREFIHRIPHISFVQGEQNAQFLQKRYQSLAQSHLFEGMQFSRDHQQLAQWMPLMMQNRDSNETLAASYIQYGTDVNFGELTRKLFDYLVKQKAELNLNHTVKNIQRLANGEWKLTVVDQQGQKRVHRSKFVFIGGGGGALPLLQKSGITDGKNVGGFPVSGLFMVCNNPEVIAKHNAKVYGKAKLGAPPMSVPHLDTRFIEGKQSLLFGPFAGFTLKFLKQGSVLDLPTSVTPTNFCSVTKAGIKNLPLAHYLMKQAMLTKAQRMADLREFVPDAKDEDWDVVVAGQRVQVIKGGEMRFGTEVIRAEDGSLAALLGASPGASTSVKAMLDVLVSCFAAELPQWQAKLTQMLPSYGKALRNEPQLYAQIKQRVDQVLALAN.

This sequence belongs to the MQO family. Requires FAD as cofactor.

It carries out the reaction (S)-malate + a quinone = a quinol + oxaloacetate. It participates in carbohydrate metabolism; tricarboxylic acid cycle; oxaloacetate from (S)-malate (quinone route): step 1/1. The protein is Probable malate:quinone oxidoreductase of Actinobacillus pleuropneumoniae serotype 7 (strain AP76).